The chain runs to 511 residues: Histidine ammonia-lyase (511 aa).

The 5-imidazolinone (Ala-Gly) cross-link spans 142-144; sequence ASG. Position 143 is a 2,3-didehydroalanine (Ser) (serine 143).

This sequence belongs to the PAL/histidase family. Post-translationally, contains an active site 4-methylidene-imidazol-5-one (MIO), which is formed autocatalytically by cyclization and dehydration of residues Ala-Ser-Gly.

The protein resides in the cytoplasm. It catalyses the reaction L-histidine = trans-urocanate + NH4(+). The protein operates within amino-acid degradation; L-histidine degradation into L-glutamate; N-formimidoyl-L-glutamate from L-histidine: step 1/3. This is Histidine ammonia-lyase from Rhizobium rhizogenes (Agrobacterium rhizogenes).